Here is a 311-residue protein sequence, read N- to C-terminus: Malate dehydrogenase (311 aa).

NAD(+) contacts are provided by residues 7 to 13 (GAAGGIG) and Asp-34. Positions 81 and 87 each coordinate substrate. NAD(+)-binding positions include Asn-94 and 117 to 119 (ITN). Positions 119 and 153 each coordinate substrate. His-177 functions as the Proton acceptor in the catalytic mechanism. Met-227 lines the NAD(+) pocket.

The protein belongs to the LDH/MDH superfamily. MDH type 1 family. Homodimer.

It carries out the reaction (S)-malate + NAD(+) = oxaloacetate + NADH + H(+). In terms of biological role, catalyzes the reversible oxidation of malate to oxaloacetate. The chain is Malate dehydrogenase from Haemophilus influenzae (strain PittGG).